Reading from the N-terminus, the 109-residue chain is Enhancer of rudimentary homolog (109 aa).

This sequence belongs to the E(R) family. In terms of assembly, homodimer.

Functionally, may have a role in the cell cycle. The protein is Enhancer of rudimentary homolog of Arabidopsis thaliana (Mouse-ear cress).